The chain runs to 384 residues: Thylakoid membrane protein TERC, chloroplastic (384 aa).

A chloroplast-targeting transit peptide spans 1 to 48 (MSLASVIHHGILPPAKSDRIFLTIPVFPPDFRARGWTKSPFSLLINPS). At 49–115 (LASAANRRLS…DYQQEETYKT (67 aa)) the chain is on the stromal side. The tract at residues 68-104 (GIDQEDEEKESRELLPHKNDENATTSRSSSSVDSGGL) is disordered. A compositionally biased stretch (basic and acidic residues) spans 76-88 (KESRELLPHKNDE). Residues 116-136 (SFKTVALCVGTAVAFGIGIGL) traverse the membrane as a helical segment. At 137–145 (KEGVGKASE) the chain is on the lumenal, thylakoid side. A helical membrane pass occupies residues 146-166 (FFAGYILEQSLSVDNLFVFVL). The Stromal segment spans residues 167-180 (VFKYFKVPLMYQNK). The chain crosses the membrane as a helical span at residues 181–201 (VLTYGIAGAIVFRFTLILLGT). Residues 202 to 206 (ATLQK) lie on the Lumenal, thylakoid side of the membrane. Residues 207–227 (FEAVNLLLAAVLLYSSFKLFA) traverse the membrane as a helical segment. At 228–275 (SEEDDTDLSDNFIVKTCQRFIPVTSSYDGNRFFTKHDGILKATPLLLT) the chain is on the stromal side. A helical membrane pass occupies residues 276–296 (VAVIELSDIAFAVDSIPAVFG). The Lumenal, thylakoid segment spans residues 297 to 301 (VTRDP). A helical transmembrane segment spans residues 302 to 322 (FIVLTSNLFAILGLRSLYTLI). Topologically, residues 323 to 335 (SEGMDELEYLQPS) are stromal. The chain crosses the membrane as a helical span at residues 336–356 (IAVVLGFIGVKMILDFFGFHI). Residue Ser-357 is a topological domain, lumenal, thylakoid. A helical membrane pass occupies residues 358–378 (TEASLGVVALSLSTGVLLSLT). Residues 379–384 (NKSSDS) lie on the Stromal side of the membrane.

As to quaternary structure, interacts with ALB3. As to expression, expressed in roots, rosette and cauline leaves, stems and flowers.

The protein localises to the plastid. Its subcellular location is the chloroplast thylakoid membrane. In terms of biological role, integral thylakoid membrane protein that plays a crucial role in thylakoid membrane biogenesis and thylakoid formation in early chloroplast development. Is essential for de novo synthesis of photosystem II (PSII) core proteins and required for efficient insertion of thylakoid membrane proteins, presumably via interaction with ALB3. May assist synthesis of thylakoid membrane proteins at the membrane insertion step. The protein is Thylakoid membrane protein TERC, chloroplastic of Arabidopsis thaliana (Mouse-ear cress).